The chain runs to 562 residues: O-fucosyltransferase 4 (562 aa).

Residues 10 to 46 form a disordered region; the sequence is SIQNRLPGSDHTTPSPPTSPHLCRSRSKSSSVSGQQQ. Residues 37–46 show a composition bias toward low complexity; that stretch reads KSSSVSGQQQ. Residues 67–87 form a helical; Signal-anchor for type II membrane protein membrane-spanning segment; that stretch reads GILLFAPIIYISCMLFHLHAA. 4 N-linked (GlcNAc...) asparagine glycosylation sites follow: Asn-122, Asn-146, Asn-185, and Asn-239. A substrate-binding site is contributed by 332–334; it reads HLR. 4 N-linked (GlcNAc...) asparagine glycosylation sites follow: Asn-404, Asn-420, Asn-450, and Asn-555.

Belongs to the glycosyltransferase GT106 family.

The protein localises to the membrane. The protein operates within glycan metabolism. The chain is O-fucosyltransferase 4 from Arabidopsis thaliana (Mouse-ear cress).